The chain runs to 285 residues: NADPH-dependent 7-cyano-7-deazaguanine reductase (285 aa).

Ile-91–Ser-93 lines the substrate pocket. Ser-93 to Lys-94 is an NADPH binding site. Cys-193 functions as the Thioimide intermediate in the catalytic mechanism. Asp-200 functions as the Proton donor in the catalytic mechanism. A substrate-binding site is contributed by His-232–Glu-233. Arg-261–Gly-262 lines the NADPH pocket.

The protein belongs to the GTP cyclohydrolase I family. QueF type 2 subfamily. In terms of assembly, homodimer.

The protein localises to the cytoplasm. The catalysed reaction is 7-aminomethyl-7-carbaguanine + 2 NADP(+) = 7-cyano-7-deazaguanine + 2 NADPH + 3 H(+). The protein operates within tRNA modification; tRNA-queuosine biosynthesis. Its function is as follows. Catalyzes the NADPH-dependent reduction of 7-cyano-7-deazaguanine (preQ0) to 7-aminomethyl-7-deazaguanine (preQ1). This chain is NADPH-dependent 7-cyano-7-deazaguanine reductase, found in Shewanella baltica (strain OS223).